The following is a 214-amino-acid chain: Uridine kinase (214 aa).

15–22 serves as a coordination point for ATP; that stretch reads GASASGKS.

It belongs to the uridine kinase family.

It localises to the cytoplasm. The enzyme catalyses uridine + ATP = UMP + ADP + H(+). It carries out the reaction cytidine + ATP = CMP + ADP + H(+). Its pathway is pyrimidine metabolism; CTP biosynthesis via salvage pathway; CTP from cytidine: step 1/3. It functions in the pathway pyrimidine metabolism; UMP biosynthesis via salvage pathway; UMP from uridine: step 1/1. The polypeptide is Uridine kinase (Aeromonas hydrophila subsp. hydrophila (strain ATCC 7966 / DSM 30187 / BCRC 13018 / CCUG 14551 / JCM 1027 / KCTC 2358 / NCIMB 9240 / NCTC 8049)).